Here is a 61-residue protein sequence, read N- to C-terminus: Small ribosomal subunit protein uS14B (61 aa).

Positions 24, 27, 40, and 43 each coordinate Zn(2+).

The protein belongs to the universal ribosomal protein uS14 family. Zinc-binding uS14 subfamily. Part of the 30S ribosomal subunit. Contacts proteins S3 and S10. The cofactor is Zn(2+).

Binds 16S rRNA, required for the assembly of 30S particles and may also be responsible for determining the conformation of the 16S rRNA at the A site. This chain is Small ribosomal subunit protein uS14B, found in Staphylococcus saprophyticus subsp. saprophyticus (strain ATCC 15305 / DSM 20229 / NCIMB 8711 / NCTC 7292 / S-41).